A 182-amino-acid chain; its full sequence is ATP synthase subunit delta (182 aa).

The protein belongs to the ATPase delta chain family. F-type ATPases have 2 components, F(1) - the catalytic core - and F(0) - the membrane proton channel. F(1) has five subunits: alpha(3), beta(3), gamma(1), delta(1), epsilon(1). CF(0) has four main subunits: a(1), b(1), b'(1) and c(10-14). The alpha and beta chains form an alternating ring which encloses part of the gamma chain. F(1) is attached to F(0) by a central stalk formed by the gamma and epsilon chains, while a peripheral stalk is formed by the delta, b and b' chains.

It is found in the cellular thylakoid membrane. Its function is as follows. F(1)F(0) ATP synthase produces ATP from ADP in the presence of a proton or sodium gradient. F-type ATPases consist of two structural domains, F(1) containing the extramembraneous catalytic core and F(0) containing the membrane proton channel, linked together by a central stalk and a peripheral stalk. During catalysis, ATP synthesis in the catalytic domain of F(1) is coupled via a rotary mechanism of the central stalk subunits to proton translocation. Functionally, this protein is part of the stalk that links CF(0) to CF(1). It either transmits conformational changes from CF(0) to CF(1) or is implicated in proton conduction. This chain is ATP synthase subunit delta, found in Parasynechococcus marenigrum (strain WH8102).